The sequence spans 356 residues: 3-dehydroquinate synthase (356 aa).

NAD(+) contacts are provided by residues Glu71–Lys76, Gly105–Asp109, Thr129–Ser130, Lys142, and Lys151. Glu184, His247, and His264 together coordinate Zn(2+).

The protein belongs to the sugar phosphate cyclases superfamily. Dehydroquinate synthase family. Co(2+) serves as cofactor. Requires Zn(2+) as cofactor. It depends on NAD(+) as a cofactor.

The protein localises to the cytoplasm. It carries out the reaction 7-phospho-2-dehydro-3-deoxy-D-arabino-heptonate = 3-dehydroquinate + phosphate. It functions in the pathway metabolic intermediate biosynthesis; chorismate biosynthesis; chorismate from D-erythrose 4-phosphate and phosphoenolpyruvate: step 2/7. Its function is as follows. Catalyzes the conversion of 3-deoxy-D-arabino-heptulosonate 7-phosphate (DAHP) to dehydroquinate (DHQ). The polypeptide is 3-dehydroquinate synthase (Lactococcus lactis subsp. cremoris (strain MG1363)).